The chain runs to 326 residues: Phospho-N-acetylmuramoyl-pentapeptide-transferase (326 aa).

10 consecutive transmembrane segments (helical) span residues 2–22, 51–71, 73–93, 113–133, 143–163, 175–195, 199–219, 225–245, 250–270, and 305–325; these read ILAT…FPYF, VPPM…LLWA, LTPE…LGFI, ILIQ…YSAE, GVII…IVGS, GLAA…AYIT, MNIT…LWFN, IFMG…TSVL, MLFA…IIQI, and VIVM…ITFL.

Belongs to the glycosyltransferase 4 family. MraY subfamily. Requires Mg(2+) as cofactor.

Its subcellular location is the cell membrane. It carries out the reaction UDP-N-acetyl-alpha-D-muramoyl-L-alanyl-gamma-D-glutamyl-meso-2,6-diaminopimeloyl-D-alanyl-D-alanine + di-trans,octa-cis-undecaprenyl phosphate = di-trans,octa-cis-undecaprenyl diphospho-N-acetyl-alpha-D-muramoyl-L-alanyl-D-glutamyl-meso-2,6-diaminopimeloyl-D-alanyl-D-alanine + UMP. The protein operates within cell wall biogenesis; peptidoglycan biosynthesis. Catalyzes the initial step of the lipid cycle reactions in the biosynthesis of the cell wall peptidoglycan: transfers peptidoglycan precursor phospho-MurNAc-pentapeptide from UDP-MurNAc-pentapeptide onto the lipid carrier undecaprenyl phosphate, yielding undecaprenyl-pyrophosphoryl-MurNAc-pentapeptide, known as lipid I. The chain is Phospho-N-acetylmuramoyl-pentapeptide-transferase from Wolbachia pipientis wMel.